Reading from the N-terminus, the 266-residue chain is UPF0294 protein YafD (266 aa).

This sequence belongs to the UPF0294 family.

It is found in the cytoplasm. The sequence is that of UPF0294 protein YafD from Salmonella dublin (strain CT_02021853).